A 420-amino-acid chain; its full sequence is Fasciclin-like arabinogalactan protein 4 (420 aa).

Residues 1-28 (MANVISISHFTLLALPYLLLLLSSTAAA) form the signal peptide. FAS1 domains are found at residues 29–177 (INVT…DSLI) and 205–351 (GINL…SKVL). N-linked (GlcNAc...) asparagine glycans are attached at residues asparagine 30, asparagine 40, asparagine 135, asparagine 154, asparagine 167, asparagine 207, asparagine 312, and asparagine 317. The interval 360-388 (SGQPVATAPPQEISLSPESSSEQPSRLVS) is disordered. Residues 368 to 384 (PPQEISLSPESSSEQPS) are compositionally biased toward low complexity. The GPI-anchor amidated serine moiety is linked to residue serine 396. Residues 397 to 420 (GAVKRPLGFLVLWCWCIAFCYVLV) constitute a propeptide, removed in mature form.

This sequence belongs to the fasciclin-like AGP family. Expressed in all plant organs and tissues, including guard cells in the leaf.

Its subcellular location is the cell membrane. Its function is as follows. May be a cell surface adhesion protein that is required for normal cell expansion. The chain is Fasciclin-like arabinogalactan protein 4 (FLA4) from Arabidopsis thaliana (Mouse-ear cress).